We begin with the raw amino-acid sequence, 252 residues long: Delta-like protein dsl-1 (252 aa).

Positions 1 to 17 (MLKYLIFLAILISVVHS) are cleaved as a signal peptide. The region spanning 120-164 (IKCNRYWHGLHCDHFCNDDFARTINRRCTQNGTLGCLEGFHGPNC) is the DSL domain. Cystine bridges form between C122/C131, C135/C147, C155/C164, C173/C181, C175/C197, and C199/C209. The region spanning 169–210 (PADSCKCQNGGKCVSSLENTWAQNGSLICECRLGHFEGKHCE) is the EGF-like domain.

In terms of assembly, may interact with lin-12/Notch receptor.

The protein resides in the secreted. In terms of biological role, probable secreted Notch ligand involved in the mediation of Notch signaling. Involved in the lin-12/Notch pathway-mediated signaling of cell fate in vulval precursor cells (VPCs), acting redundantly with lag-2, apx-1 and osm-11. May also be involved in glp-1/Notch signaling. This is Delta-like protein dsl-1 from Caenorhabditis elegans.